A 350-amino-acid polypeptide reads, in one-letter code: MGVTSTAPHLLRAARGEIVDRPPVWMMRQAGRYMKAYRDLREKYPSFRDRSEIPEVAIEVSLQPWKAFQPDGVILFSDIVTPLPGLGIEMDIAEGKGPIIHAPIRTQAQIEQLRPLEPEAALPFIKTILQALRQEVGNQSTVLGFVGAPWTLAAYAVEGKGSKTYSIIKNMAFSDPTILHQLLSKLADAIAIYARYQIDSGAQVVQMFDSWAGQLSPQDYDTFALPYQQRVFQQIKQTHPDTPLILLVSGSAGVLERMGQSGADIVTVDWTVDMADARARLGKQMKVQGNLDPGVLYASKQFIRDRIIDTVRKAGNWGHILNLGHGVLPDTPEENVAFFFETAKQLNVLV.

Residues 28 to 32 (RQAGR), phenylalanine 47, aspartate 78, tyrosine 155, serine 210, and histidine 325 each bind substrate.

This sequence belongs to the uroporphyrinogen decarboxylase family. Homodimer.

It is found in the cytoplasm. The catalysed reaction is uroporphyrinogen III + 4 H(+) = coproporphyrinogen III + 4 CO2. The protein operates within porphyrin-containing compound metabolism; protoporphyrin-IX biosynthesis; coproporphyrinogen-III from 5-aminolevulinate: step 4/4. Its function is as follows. Catalyzes the decarboxylation of four acetate groups of uroporphyrinogen-III to yield coproporphyrinogen-III. The protein is Uroporphyrinogen decarboxylase of Nostoc sp. (strain PCC 7120 / SAG 25.82 / UTEX 2576).